Here is a 746-residue protein sequence, read N- to C-terminus: Catalase-peroxidase (746 aa).

Residues 1–20 are compositionally biased toward polar residues; sequence MSSDTSSSRPPQPDSGTASK. The tract at residues 1–42 is disordered; the sequence is MSSDTSSSRPPQPDSGTASKSESENPAIPSPKPKAHAPLTNR. Positions 113 to 236 form a cross-link, tryptophyl-tyrosyl-methioninium (Trp-Tyr) (with M-262); it reads WHAAGTYRIH…YGATTMGLIY (124 aa). Residue His114 is the Proton acceptor of the active site. Residues 236–262 constitute a cross-link (tryptophyl-tyrosyl-methioninium (Tyr-Met) (with W-113)); sequence YVNPEGPEGKPDPIAAAIDIRETFGRM. Position 277 (His277) interacts with heme b.

This sequence belongs to the peroxidase family. Peroxidase/catalase subfamily. As to quaternary structure, homodimer or homotetramer. Heme b serves as cofactor. Formation of the three residue Trp-Tyr-Met cross-link is important for the catalase, but not the peroxidase activity of the enzyme.

It carries out the reaction H2O2 + AH2 = A + 2 H2O. The enzyme catalyses 2 H2O2 = O2 + 2 H2O. Its function is as follows. Bifunctional enzyme with both catalase and broad-spectrum peroxidase activity. May play a role in the intracellular survival of mycobacteria. The protein is Catalase-peroxidase of Mycobacterium intracellulare.